Here is a 490-residue protein sequence, read N- to C-terminus: Aspartyl/glutamyl-tRNA(Asn/Gln) amidotransferase subunit B (490 aa).

It belongs to the GatB/GatE family. GatB subfamily. As to quaternary structure, heterotrimer of A, B and C subunits.

The enzyme catalyses L-glutamyl-tRNA(Gln) + L-glutamine + ATP + H2O = L-glutaminyl-tRNA(Gln) + L-glutamate + ADP + phosphate + H(+). It carries out the reaction L-aspartyl-tRNA(Asn) + L-glutamine + ATP + H2O = L-asparaginyl-tRNA(Asn) + L-glutamate + ADP + phosphate + 2 H(+). In terms of biological role, allows the formation of correctly charged Asn-tRNA(Asn) or Gln-tRNA(Gln) through the transamidation of misacylated Asp-tRNA(Asn) or Glu-tRNA(Gln) in organisms which lack either or both of asparaginyl-tRNA or glutaminyl-tRNA synthetases. The reaction takes place in the presence of glutamine and ATP through an activated phospho-Asp-tRNA(Asn) or phospho-Glu-tRNA(Gln). This chain is Aspartyl/glutamyl-tRNA(Asn/Gln) amidotransferase subunit B, found in Prochlorococcus marinus (strain MIT 9312).